A 399-amino-acid chain; its full sequence is MALKLVYGVFTLALLGISSVNADCSLKIPESVENEKTPVIMVRKSLKTFEYDLFQPTGEVTNFPERTELLLACTGAQNYFKNGEESVTLMCHNNEFDDGQGNGLDLFTCVKTPTAELRKTKERCSLGDLYVYDVVFRISEEELVGPVYDICYNEYSQKPAYSRNIINGAAVNYRVPESETDLTVSLAKDFTTRDVNNYFKLENQKQRFQGYTIDGKPLVDDKNFFAPGQLAPDTSMITPADKLSTYDYANIVPQYKTVYDGNVWRVENITRDLAVNRQAKFEVYTGGYERLTALHNGKEEEIFLSAKKYVHEIPKYIYKFVVDKENDAGIVFFTLNNPHVKNVKGTEFCKNQCEEANVLDSNFKDWTQGYTFCCTWNNVKDYVRALPQDIEINNLLKFN.

The N-terminal stretch at 1–22 (MALKLVYGVFTLALLGISSVNA) is a signal peptide. N-linked (GlcNAc...) asparagine glycosylation is present at Asn-268.

This sequence belongs to the DNA/RNA non-specific endonuclease family. The cofactor is a divalent metal cation. Saliva (at protein level).

It localises to the secreted. Binds double-stranded DNA (dsDNA) with high affinity. Binds double-stranded RNA. Binds single-stranded DNA with lower affinity and with a preference for purine-rich sequences. Shows residual nuclease activity for dsDNA. May facilitate blood meal intake by lowering the local viscosity created by the release of host DNA. The sequence is that of Salivary protein Tsal1 from Glossina morsitans morsitans (Savannah tsetse fly).